A 726-amino-acid polypeptide reads, in one-letter code: Catalase-peroxidase (726 aa).

The interval 1 to 33 is disordered; that stretch reads MSTSDDIHNTTATGKCPFHQGGHDQSAGAGTTT. Positions 105–226 form a cross-link, tryptophyl-tyrosyl-methioninium (Trp-Tyr) (with M-252); it reads WHGAGTYRSI…LGATEMGLIY (122 aa). Residue H106 is the Proton acceptor of the active site. A cross-link (tryptophyl-tyrosyl-methioninium (Tyr-Met) (with W-105)) is located at residues 226–252; that stretch reads YVNPEGPDHSGEPLSAAAAIRATFGNM. H267 contributes to the heme b binding site.

It belongs to the peroxidase family. Peroxidase/catalase subfamily. In terms of assembly, homodimer or homotetramer. Requires heme b as cofactor. In terms of processing, formation of the three residue Trp-Tyr-Met cross-link is important for the catalase, but not the peroxidase activity of the enzyme.

The enzyme catalyses H2O2 + AH2 = A + 2 H2O. It carries out the reaction 2 H2O2 = O2 + 2 H2O. In terms of biological role, bifunctional enzyme with both catalase and broad-spectrum peroxidase activity. In Shigella boydii serotype 18 (strain CDC 3083-94 / BS512), this protein is Catalase-peroxidase.